The primary structure comprises 264 residues: tRNA pseudouridine synthase A (264 aa).

D51 (nucleophile) is an active-site residue. Y109 lines the substrate pocket.

Belongs to the tRNA pseudouridine synthase TruA family. Homodimer.

It carries out the reaction uridine(38/39/40) in tRNA = pseudouridine(38/39/40) in tRNA. Formation of pseudouridine at positions 38, 39 and 40 in the anticodon stem and loop of transfer RNAs. This is tRNA pseudouridine synthase A from Vibrio cholerae serotype O1 (strain ATCC 39541 / Classical Ogawa 395 / O395).